The sequence spans 345 residues: Probable galacturonosyltransferase-like 3 (345 aa).

Residues 1–7 (MSSLRLR) lie on the Cytoplasmic side of the membrane. A helical; Signal-anchor for type II membrane protein transmembrane segment spans residues 8–28 (LCLLLLLPITISCVTVTLTDL). Residues 29–345 (PAFREAPAFR…FRYSPLISDS (317 aa)) lie on the Lumenal side of the membrane. N-linked (GlcNAc...) asparagine glycosylation occurs at Asn-197.

Belongs to the glycosyltransferase 8 family.

It localises to the golgi apparatus membrane. Its pathway is glycan metabolism; pectin biosynthesis. Its function is as follows. May be involved in pectin and/or xylans biosynthesis in cell walls. This is Probable galacturonosyltransferase-like 3 (GATL3) from Arabidopsis thaliana (Mouse-ear cress).